Here is a 377-residue protein sequence, read N- to C-terminus: MSVLFTILLMAVIGGFIGAMTNYIAIRMLFRPYKAIYLFNKRLPFTPGLIPKRRDELAEHIGKVVVSHLLTEDAIRARLLDENLQKEITDTITKMFHEKMQLETTPNELLHHFGYENAEIRSMTWVEKTLEKEINHFLTTKKTTKMSDLIPTMLESELTTKLPHVTERITSKMTLFVSSEEGKIQIKQMLQKFFEEHGKMGSMARMFINIDSFSEKIQQEGLKLIGQEDTKNLINQLLTTEWKNFEAKELQELIPTEKQAHLAGQLTSELIQTFPHEKLFNQPIQVMLRGYEAAITEKVIPFAVERMLDFVATHSAEIVERMDLAKLVETQIATFSLPEIEKLVVEISGRELKMITYLGGILGGFIGIIQGVLAMWI.

2 helical membrane-spanning segments follow: residues 1–21 (MSVL…GAMT) and 357–377 (YLGG…AMWI).

Belongs to the UPF0754 family.

Its subcellular location is the cell membrane. The chain is UPF0754 membrane protein LMOf2365_2257 from Listeria monocytogenes serotype 4b (strain F2365).